A 58-amino-acid polypeptide reads, in one-letter code: Alpha-conotoxin-like Pu1.6 (58 aa).

The first 17 residues, 1 to 17 (MFTVFLLVVLVTTVVFS), serve as a signal peptide directing secretion. Residues 18–35 (TSDHRPASNHENRRASKR) constitute a propeptide that is removed on maturation. 2 disulfides stabilise this stretch: C44-C50 and C45-C58. Residues 46–48 (TNP) form a lacks the Ser-Xaa-Pro motif that is crucial for potent interaction with nAChR region.

This sequence belongs to the conotoxin A superfamily. In terms of tissue distribution, expressed by the venom duct.

It is found in the secreted. Functionally, alpha-conotoxins act on postsynaptic membranes, they bind to the nicotinic acetylcholine receptors (nAChR) and thus inhibit them. Has possibly a distinct nAChR binding mode from other alpha-conotoxins, due to a different three residue motif (lacks the Ser-Xaa-Pro motif). In Conus pulicarius (Flea-bitten cone), this protein is Alpha-conotoxin-like Pu1.6.